Reading from the N-terminus, the 790-residue chain is LPS-assembly protein LptD (790 aa).

Positions 1–20 (MRMLRWLILSAFSVAGAVQA) are cleaved as a signal peptide.

Belongs to the LptD family. In terms of assembly, component of the lipopolysaccharide transport and assembly complex. Interacts with LptE and LptA.

The protein resides in the cell outer membrane. Together with LptE, is involved in the assembly of lipopolysaccharide (LPS) at the surface of the outer membrane. The chain is LPS-assembly protein LptD from Bordetella pertussis (strain Tohama I / ATCC BAA-589 / NCTC 13251).